Here is a 382-residue protein sequence, read N- to C-terminus: Anhydro-N-acetylmuramic acid kinase (382 aa).

Residue 9–16 (GTSLDGID) coordinates ATP.

The protein belongs to the anhydro-N-acetylmuramic acid kinase family.

It catalyses the reaction 1,6-anhydro-N-acetyl-beta-muramate + ATP + H2O = N-acetyl-D-muramate 6-phosphate + ADP + H(+). Its pathway is amino-sugar metabolism; 1,6-anhydro-N-acetylmuramate degradation. The protein operates within cell wall biogenesis; peptidoglycan recycling. Catalyzes the specific phosphorylation of 1,6-anhydro-N-acetylmuramic acid (anhMurNAc) with the simultaneous cleavage of the 1,6-anhydro ring, generating MurNAc-6-P. Is required for the utilization of anhMurNAc either imported from the medium or derived from its own cell wall murein, and thus plays a role in cell wall recycling. In Bacillus cereus (strain ZK / E33L), this protein is Anhydro-N-acetylmuramic acid kinase.